The sequence spans 358 residues: Photosystem II protein D1 2 (358 aa).

Helical transmembrane passes span 28–45 (YVGW…AATT), 117–132 (HFLI…QWEL), and 141–155 (WICV…AAFA). H117 contacts chlorophyll a. Y125 contacts pheophytin a. [CaMn4O5] cluster-binding residues include D169 and E188. Residues 196-217 (FHMLGVAGVFGGSLFSAMHGSL) traverse the membrane as a helical segment. Residue H197 participates in chlorophyll a binding. A quinone-binding positions include H214 and 263-264 (SF). Fe cation is bound at residue H214. Residue H271 participates in Fe cation binding. Residues 273-287 (FLAAWPVVGIWFTSM) form a helical membrane-spanning segment. 4 residues coordinate [CaMn4O5] cluster: H331, E332, D341, and A343. Residues 344 to 358 (ATESTPVALQAPTIG) constitute a propeptide that is removed on maturation.

It belongs to the reaction center PufL/M/PsbA/D family. PSII is composed of 1 copy each of membrane proteins PsbA, PsbB, PsbC, PsbD, PsbE, PsbF, PsbH, PsbI, PsbJ, PsbK, PsbL, PsbM, PsbT, PsbX, PsbY, PsbZ, Psb30/Ycf12, peripheral proteins PsbO, CyanoQ (PsbQ), PsbU, PsbV and a large number of cofactors. It forms dimeric complexes. The D1/D2 heterodimer binds P680, chlorophylls that are the primary electron donor of PSII, and subsequent electron acceptors. It shares a non-heme iron and each subunit binds pheophytin, quinone, additional chlorophylls, carotenoids and lipids. D1 provides most of the ligands for the Mn4-Ca-O5 cluster of the oxygen-evolving complex (OEC). There is also a Cl(-1) ion associated with D1 and D2, which is required for oxygen evolution. The PSII complex binds additional chlorophylls, carotenoids and specific lipids. is required as a cofactor. In terms of processing, tyr-160 forms a radical intermediate that is referred to as redox-active TyrZ, YZ or Y-Z. C-terminally processed by CtpA; processing is essential to allow assembly of the oxygen-evolving complex and thus photosynthetic growth.

It localises to the cellular thylakoid membrane. It carries out the reaction 2 a plastoquinone + 4 hnu + 2 H2O = 2 a plastoquinol + O2. Functionally, photosystem II (PSII) is a light-driven water:plastoquinone oxidoreductase that uses light energy to abstract electrons from H(2)O, generating O(2) and a proton gradient subsequently used for ATP formation. It consists of a core antenna complex that captures photons, and an electron transfer chain that converts photonic excitation into a charge separation. The D1/D2 (PsbA/PsbD) reaction center heterodimer binds P680, the primary electron donor of PSII as well as several subsequent electron acceptors. This chain is Photosystem II protein D1 2, found in Synechococcus sp. (strain WH7803).